The primary structure comprises 376 residues: MASYPCHQHASAFDQAARSRGHNNRRTALRPRRQQKATEVRLEQKMPTLLRVYIDGPHGMGKTTTTQLLVALGSRDDIVYVPEPMTYWRVLGASETIANIYTTQHRLDQGEISAGDAAVVMTSAQITMGMPYAVTDAVLAPHIGGEAGSSHAPPPALTLIFDRHPIAALLCYPAARYLMGSMTPQAVLAFVALIPPTLPGTNIVLGALPEDRHIDRLAKRQRPGERLDLAMLAAIRRVYGLLANTVRYLQGGGSWREDWGQLSGAAVPPQGAEPQSNAGPRPHIGDTLFTLFRAPELLAPNGDLYNVFAWALDVLAKRLRPMHVFILDYDQSPAGCRDALLQLTSGMVQTHVTTPGSIPTICDLARTFAREMGEAN.

Residues 1-38 are disordered; sequence MASYPCHQHASAFDQAARSRGHNNRRTALRPRRQQKAT. Basic residues predominate over residues 19-35; the sequence is SRGHNNRRTALRPRRQQ. Position 56 to 63 (56 to 63) interacts with ATP; it reads GPHGMGKT. The Proton acceptor role is filled by Glu-83. Substrate-binding residues include Tyr-101 and Gln-125. Arg-216 provides a ligand contact to ATP. Arg-222 serves as a coordination point for substrate.

Belongs to the herpesviridae thymidine kinase family. Homodimer.

It carries out the reaction thymidine + ATP = dTMP + ADP + H(+). Functionally, catalyzes the transfer of the gamma-phospho group of ATP to thymidine to generate dTMP in the salvage pathway of pyrimidine synthesis. The dTMP serves as a substrate for DNA polymerase during viral DNA replication. Allows the virus to be reactivated and to grow in non-proliferative cells lacking a high concentration of phosphorylated nucleic acid precursors. In Homo sapiens (Human), this protein is Thymidine kinase.